The following is a 1715-amino-acid chain: Neurexin-2 (1715 aa).

Residues 1 to 29 (MALGSRWRPPPQLPPLLLLLALVAGVRGL) form the signal peptide. Positions 30-206 (EFGGGPGQWA…LRGAAADPLC (177 aa)) constitute a Laminin G-like 1 domain. The Extracellular portion of the chain corresponds to 30–1639 (EFGGGPGQWA…EVIRESSSTT (1610 aa)). N-linked (GlcNAc...) asparagine glycosylation is present at asparagine 60. The region spanning 202 to 242 (ADPLCAPARNPCANGGLCTVLAPGEVGCDCSHTGFGGKFCS) is the EGF-like 1 domain. 3 cysteine pairs are disulfide-bonded: cysteine 206-cysteine 219, cysteine 213-cysteine 229, and cysteine 231-cysteine 241. Laminin G-like domains are found at residues 289 to 486 (VATF…SFRC) and 493 to 686 (DPVT…APFC). Aspartate 335 lines the Ca(2+) pocket. The N-linked (GlcNAc...) asparagine glycan is linked to asparagine 338. 2 residues coordinate Ca(2+): leucine 352 and methionine 420. Cystine bridges form between cysteine 450-cysteine 486, cysteine 657-cysteine 686, cysteine 694-cysteine 705, cysteine 699-cysteine 714, and cysteine 716-cysteine 726. Residues 690–727 (TLKQCASAPCRNGGICREGWNRFVCDCIGTGFLGRVCE) form the EGF-like 2 domain. 2 Laminin G-like domains span residues 732-907 (VLSY…ITYC) and 921-1096 (DPVT…ERGC). Aspartate 779 and leucine 796 together coordinate Ca(2+). Asparagine 844 carries an N-linked (GlcNAc...) asparagine glycan. Ca(2+) is bound at residue arginine 857. 4 cysteine pairs are disulfide-bonded: cysteine 1068/cysteine 1096, cysteine 1103/cysteine 1114, cysteine 1108/cysteine 1123, and cysteine 1125/cysteine 1135. An EGF-like 3 domain is found at 1099-1136 (PSTTCTEESCANQGVCLQQWDGFTCDCTMTSYGGPVCN). Residues 1140 to 1348 (TTYIFGKGGA…HLRLVGEGPS (209 aa)) form the Laminin G-like 6 domain. Positions 1192 and 1209 each coordinate Ca(2+). Residue asparagine 1239 is glycosylated (N-linked (GlcNAc...) asparagine). 2 residues coordinate Ca(2+): isoleucine 1291 and asparagine 1293. A glycan (O-linked (Xyl...) (heparan sulfate) serine) is linked at serine 1403. 3 disordered regions span residues 1461–1511 (ATQD…LPPT), 1529–1549 (LLSPRKPAPRPNLRTDGATGA), and 1583–1626 (LGPG…RGPP). Residues 1640 to 1660 (GMVVGIVAAAALCILILLYAM) traverse the membrane as a helical segment. Topologically, residues 1661–1715 (YKYRNRDEGSYQVDQSRNYISNSAQSNGAVVKEKAPAAPKTPSKAKKNKDKEYYV) are cytoplasmic. Positions 1682–1715 (NSAQSNGAVVKEKAPAAPKTPSKAKKNKDKEYYV) are disordered.

It belongs to the neurexin family. As to quaternary structure, the laminin G-like domain 1 binds to NXPH1. Interacts with PATJ. Interacts with CBLN1, CBLN2 and, less avidly, with CBLN4. Specific isoforms bind neuroligins NLGN1, NLGN2 and NLGN3. Isoform 5c/alpha-2C binds to alpha-dystroglycan. Interacts (via Laminin G-like 1 domain) with IGSF21 (Ig-like 1 domain) in a trans-interaction manner. Interacts with CLSTN3. In terms of processing, O-glycosylated; contains heparan sulfate. Heparan sulfate attachment is required for synapse development by mediating interactions with neuroligins. In terms of tissue distribution, brain (neuronal synapse).

It localises to the presynaptic cell membrane. Neuronal cell surface protein that may be involved in cell recognition and cell adhesion. May mediate intracellular signaling. The chain is Neurexin-2 (Nrxn2) from Rattus norvegicus (Rat).